Here is a 341-residue protein sequence, read N- to C-terminus: NADH-quinone oxidoreductase subunit H 1 (341 aa).

The next 9 membrane-spanning stretches (helical) occupy residues 7–27 (IILT…ISLL), 46–66 (PNVV…KYIF), 80–100 (FFLA…VIPF), 111–131 (VAIL…IMGG), 157–177 (LGLI…SHIV), 183–203 (AFGL…LFFI), 244–264 (YIAI…GWLS), 273–293 (VFWM…VKAI), and 305–325 (IGWK…AFLA).

It belongs to the complex I subunit 1 family. NDH-1 is composed of 14 different subunits. Subunits NuoA, H, J, K, L, M, N constitute the membrane sector of the complex.

It is found in the cell inner membrane. It catalyses the reaction a quinone + NADH + 5 H(+)(in) = a quinol + NAD(+) + 4 H(+)(out). Functionally, NDH-1 shuttles electrons from NADH, via FMN and iron-sulfur (Fe-S) centers, to quinones in the respiratory chain. The immediate electron acceptor for the enzyme in this species is believed to be ubiquinone. Couples the redox reaction to proton translocation (for every two electrons transferred, four hydrogen ions are translocated across the cytoplasmic membrane), and thus conserves the redox energy in a proton gradient. This subunit may bind ubiquinone. The chain is NADH-quinone oxidoreductase subunit H 1 from Cereibacter sphaeroides (strain ATCC 17029 / ATH 2.4.9) (Rhodobacter sphaeroides).